Reading from the N-terminus, the 105-residue chain is Cell division protein FtsB (105 aa).

Residues M1–P3 lie on the Cytoplasmic side of the membrane. Residues F4–F21 form a helical membrane-spanning segment. Residues G22 to Q105 lie on the Periplasmic side of the membrane. A coiled-coil region spans residues H38–L75.

The protein belongs to the FtsB family. Part of a complex composed of FtsB, FtsL and FtsQ.

It is found in the cell inner membrane. Functionally, essential cell division protein. May link together the upstream cell division proteins, which are predominantly cytoplasmic, with the downstream cell division proteins, which are predominantly periplasmic. The polypeptide is Cell division protein FtsB (Shewanella amazonensis (strain ATCC BAA-1098 / SB2B)).